Here is a 104-residue protein sequence, read N- to C-terminus: Large ribosomal subunit protein bL21 (104 aa).

It belongs to the bacterial ribosomal protein bL21 family. As to quaternary structure, part of the 50S ribosomal subunit. Contacts protein L20.

Functionally, this protein binds to 23S rRNA in the presence of protein L20. The chain is Large ribosomal subunit protein bL21 from Granulibacter bethesdensis (strain ATCC BAA-1260 / CGDNIH1).